A 118-amino-acid chain; its full sequence is MTLEYIYIFIFFWGAFFISCLLIFLSYFLVYQESDIEKNSAYECGFQPFEDTRSKFNVRYYLIAILFMIFDLEIMYLFPWSISISTGSFFGVWAIFLFLIILTVGFIYEWQKGALEWD.

The next 3 helical transmembrane spans lie at 5–25, 62–82, and 87–107; these read YIYI…LIFL, LIAI…PWSI, and GSFF…VGFI.

Belongs to the complex I subunit 3 family.

It is found in the mitochondrion membrane. It carries out the reaction a ubiquinone + NADH + 5 H(+)(in) = a ubiquinol + NAD(+) + 4 H(+)(out). Functionally, core subunit of the mitochondrial membrane respiratory chain NADH dehydrogenase (Complex I) that is believed to belong to the minimal assembly required for catalysis. Complex I functions in the transfer of electrons from NADH to the respiratory chain. The immediate electron acceptor for the enzyme is believed to be ubiquinone. This chain is NADH-ubiquinone oxidoreductase chain 3 (ND3), found in Acanthamoeba castellanii (Amoeba).